The sequence spans 692 residues: A-type ATP synthase subunit I (692 aa).

7 consecutive transmembrane segments (helical) span residues 389 to 409, 422 to 442, 494 to 514, 531 to 551, 553 to 573, 602 to 622, and 624 to 644; these read GIML…LFIW, LGYI…ITGG, ILVF…FVGF, GVWI…FAGA, TMIA…ASMY, ARLL…NIMA, and LVGE…LLVG.

It belongs to the V-ATPase 116 kDa subunit family. The A-type ATPase is composed of subunits A(3), B(3), C, D, E(1 or 2), F, H(2), I and K(x).

It is found in the cell membrane. Component of the A-type ATP synthase that produces ATP from ADP in the presence of a proton gradient across the membrane. In Methanocaldococcus jannaschii (strain ATCC 43067 / DSM 2661 / JAL-1 / JCM 10045 / NBRC 100440) (Methanococcus jannaschii), this protein is A-type ATP synthase subunit I.